The chain runs to 229 residues: Ion-translocating oxidoreductase complex subunit E (229 aa).

5 consecutive transmembrane segments (helical) span residues 58–78, 82–102, 105–125, 147–167, and 201–221; these read LGLGLATLLVLTITNTIISLF, IPHDIRIPIYVMIIATAVTTI, LMNAFAFPVYQSLGIFVPLIV, AFDGFAMGLGMTLSLVVLGAI, and GLLLAILPPGAFIGLGLILAV.

Belongs to the NqrDE/RnfAE family. In terms of assembly, the complex is composed of six subunits: RnfA, RnfB, RnfC, RnfD, RnfE and RnfG.

It is found in the cell inner membrane. Its function is as follows. Part of a membrane-bound complex that couples electron transfer with translocation of ions across the membrane. The chain is Ion-translocating oxidoreductase complex subunit E from Glaesserella parasuis serovar 5 (strain SH0165) (Haemophilus parasuis).